The sequence spans 229 residues: 2-C-methyl-D-erythritol 4-phosphate cytidylyltransferase (229 aa).

It belongs to the IspD/TarI cytidylyltransferase family. IspD subfamily.

It catalyses the reaction 2-C-methyl-D-erythritol 4-phosphate + CTP + H(+) = 4-CDP-2-C-methyl-D-erythritol + diphosphate. It functions in the pathway isoprenoid biosynthesis; isopentenyl diphosphate biosynthesis via DXP pathway; isopentenyl diphosphate from 1-deoxy-D-xylulose 5-phosphate: step 2/6. Its function is as follows. Catalyzes the formation of 4-diphosphocytidyl-2-C-methyl-D-erythritol from CTP and 2-C-methyl-D-erythritol 4-phosphate (MEP). This is 2-C-methyl-D-erythritol 4-phosphate cytidylyltransferase from Neisseria gonorrhoeae (strain ATCC 700825 / FA 1090).